Here is a 213-residue protein sequence, read N- to C-terminus: MKPYQRQFIEFALDKQVLKFGEFTLKSGRKSPYFFNAGLFNTGRDLALLGRFYAEALVDSGIEFDLLFGPAYKGIPIATTTAVALAEHHDKDLPYCFNRKEAKDHGEGGNLVGSALRGRVMLVDDVITAGTAIRESMEIIQAHGATLAGVLISLDRQERGRSEISAIHEVERDYGCNVISIITLKDLITYLEEKPEMAEHLAAVRAYWEEFGV.

Position 26 (K26) interacts with 5-phospho-alpha-D-ribose 1-diphosphate. 34 to 35 (FF) is an orotate binding site. 5-phospho-alpha-D-ribose 1-diphosphate-binding positions include 72–73 (YK), R99, K100, K103, H105, and 124–132 (DDVITAGTA). Orotate is bound by residues T128 and R156.

Belongs to the purine/pyrimidine phosphoribosyltransferase family. PyrE subfamily. As to quaternary structure, homodimer. The cofactor is Mg(2+).

It catalyses the reaction orotidine 5'-phosphate + diphosphate = orotate + 5-phospho-alpha-D-ribose 1-diphosphate. Its pathway is pyrimidine metabolism; UMP biosynthesis via de novo pathway; UMP from orotate: step 1/2. Its function is as follows. Catalyzes the transfer of a ribosyl phosphate group from 5-phosphoribose 1-diphosphate to orotate, leading to the formation of orotidine monophosphate (OMP). This is Orotate phosphoribosyltransferase from Salmonella arizonae (strain ATCC BAA-731 / CDC346-86 / RSK2980).